Consider the following 306-residue polypeptide: Curved DNA-binding protein (306 aa).

One can recognise a J domain in the interval Asp-5 to Trp-69.

Its subcellular location is the cytoplasm. The protein resides in the nucleoid. Functionally, DNA-binding protein that preferentially recognizes a curved DNA sequence. It is probably a functional analog of DnaJ; displays overlapping activities with DnaJ, but functions under different conditions, probably acting as a molecular chaperone in an adaptive response to environmental stresses other than heat shock. Lacks autonomous chaperone activity; binds native substrates and targets them for recognition by DnaK. Its activity is inhibited by the binding of CbpM. The sequence is that of Curved DNA-binding protein from Shigella sonnei (strain Ss046).